Consider the following 207-residue polypeptide: Small ribosomal subunit protein uS4 (207 aa).

Residues 20 to 45 form a disordered region; it reads TPKAARYMEKRPYAPGEHGRTKRKAD. Residues 93–158 form the S4 RNA-binding domain; sequence MRLDALVLRA…TEPFQVAAAG (66 aa).

It belongs to the universal ribosomal protein uS4 family. Part of the 30S ribosomal subunit. Contacts protein S5. The interaction surface between S4 and S5 is involved in control of translational fidelity.

One of the primary rRNA binding proteins, it binds directly to 16S rRNA where it nucleates assembly of the body of the 30S subunit. In terms of biological role, with S5 and S12 plays an important role in translational accuracy. This is Small ribosomal subunit protein uS4 from Leifsonia xyli subsp. xyli (strain CTCB07).